A 2126-amino-acid chain; its full sequence is Phthioceranic/hydroxyphthioceranic acid synthase (2126 aa).

The 424-residue stretch at 24-447 folds into the Ketosynthase family 3 (KS3) domain; sequence VTPVAVIGMA…GTNVHAVVEQ (424 aa). Cys-196 serves as the catalytic Acyl-thioester intermediate; for beta-ketoacyl synthase activity. Residues His-331 and His-367 each act as for beta-ketoacyl synthase activity in the active site. The tract at residues 449–549 is linker domain (LD); it reads PQTEAQPHAA…VYQPAVGQDD (101 aa). Residues 550-849 form an acyltransferase (AT) region; the sequence is RGPVWLFSGQ…VAALAGMRRE (300 aa). The active-site Acyl-ester intermediate; for acyltransferase activity is Ser-641. Residues 909–1191 form a dehydratase (DH) region; that stretch reads STVAVHPLLG…LAVCGLRIGT (283 aa). The segment at 914 to 1032 is N-terminal hotdog fold; it reads HPLLGAHVRL…RRASAVLQQV (119 aa). Positions 914–1198 constitute a PKS/mFAS DH domain; sequence HPLLGAHVRL…IGTGVSERDK (285 aa). The Proton acceptor; for dehydratase activity role is filled by His-947. Positions 1051–1198 are C-terminal hotdog fold; that stretch reads PCRVDGEDLR…IGTGVSERDK (148 aa). The active-site Proton donor; for dehydratase activity is the Asp-1115. Positions 1227 to 1398 are pseudo beta-ketoacyl reductase (PsiKR); the sequence is KWLLISDCAA…SEEDETAWRD (172 aa). The segment at 1426-1750 is enoylreductase (ER); it reads SGMRLQIRTP…EHTGKLVLHI (325 aa). Residues 1772–2019 are beta-ketoacyl reductase (KR); it reads GSYIITGGLG…AERSRFFEVF (248 aa). Residues 1780 to 1783, 1803 to 1806, 1831 to 1832, and 1904 to 1905 contribute to the NADP(+) site; these read LGGL, SRTQ, DI, and FS. A Carrier domain is found at 2040-2126; sequence DEWPARLRQL…DAPAAALSSQ (87 aa). An O-(pantetheine 4'-phosphoryl)serine modification is found at Ser-2075.

It depends on pantetheine 4'-phosphate as a cofactor.

The catalysed reaction is hexadecanoyl-[(hydroxy)phthioceranic acid synthase] + 7 (S)-methylmalonyl-CoA + 14 NADPH + 21 H(+) = C37-phthioceranyl-[(hydroxy)phthioceranic acid synthase] + 7 CO2 + 14 NADP(+) + 7 CoA + 7 H2O. It catalyses the reaction hexadecanoyl-[(hydroxy)phthioceranic acid synthase] + 8 (S)-methylmalonyl-CoA + 16 NADPH + 24 H(+) = C40-phthioceranyl-[(hydroxy)phthioceranic acid synthase] + 8 CO2 + 16 NADP(+) + 8 CoA + 8 H2O. It functions in the pathway lipid metabolism; fatty acid biosynthesis. Its pathway is glycolipid metabolism; sulfolipid-1 biosynthesis. Functionally, involved in sulfolipid-1 biosynthesis. Catalyzes the synthesis of the hepta- and octamethyl phthioceranic and hydroxyphthioceranic acids, the methyl-branched acyl constituents of sulfolipids. The polypeptide is Phthioceranic/hydroxyphthioceranic acid synthase (pks2) (Mycobacterium bovis (strain ATCC BAA-935 / AF2122/97)).